A 322-amino-acid polypeptide reads, in one-letter code: MNSLKDGNHTALTGFILLGLTDDPILRVILFMIILSGNLSIIILIRISSQLHHPMYFFLSHLAFADMAYSSSVTPNMLVNFLVERNTVSYLGCAIQLGSAAFFATVECVLLAAMAYDRFVAICSPLLYSTKMSTQVSVQLLLVVYIAGFLIAVSYTTSFYFLLFCGPNQVNHFFCDFAPLLELSCSDISVSTVVLSFSSGSIIVVTVCVIAVCYIYILITILKMRSTEGHHKAFSTCTSHLTVVTLFYGTITFIYVMPNFSYSTDQNKVVSVLYTVVIPMLNPLIYSLRNKEIKGALKRELVRKILSHDACYFSRTSNNDIT.

Topologically, residues 1 to 28 (MNSLKDGNHTALTGFILLGLTDDPILRV) are extracellular. The N-linked (GlcNAc...) asparagine glycan is linked to Asn8. The helical transmembrane segment at 29–42 (ILFMIILSGNLSII) threads the bilayer. At 43-50 (ILIRISSQ) the chain is on the cytoplasmic side. A helical membrane pass occupies residues 51–71 (LHHPMYFFLSHLAFADMAYSS). Over 72–95 (SVTPNMLVNFLVERNTVSYLGCAI) the chain is Extracellular. A disulfide bond links Cys93 and Cys185. The helical transmembrane segment at 96–116 (QLGSAAFFATVECVLLAAMAY) threads the bilayer. At 117–135 (DRFVAICSPLLYSTKMSTQ) the chain is on the cytoplasmic side. Residues 136–156 (VSVQLLLVVYIAGFLIAVSYT) traverse the membrane as a helical segment. At 157 to 192 (TSFYFLLFCGPNQVNHFFCDFAPLLELSCSDISVST) the chain is on the extracellular side. Residues 193–213 (VVLSFSSGSIIVVTVCVIAVC) traverse the membrane as a helical segment. At 214–233 (YIYILITILKMRSTEGHHKA) the chain is on the cytoplasmic side. A helical transmembrane segment spans residues 234 to 254 (FSTCTSHLTVVTLFYGTITFI). Over 255-267 (YVMPNFSYSTDQN) the chain is Extracellular. An N-linked (GlcNAc...) asparagine glycan is attached at Asn259. A helical membrane pass occupies residues 268-288 (KVVSVLYTVVIPMLNPLIYSL). At 289–322 (RNKEIKGALKRELVRKILSHDACYFSRTSNNDIT) the chain is on the cytoplasmic side.

It belongs to the G-protein coupled receptor 1 family. In terms of tissue distribution, expressed in the tongue.

It localises to the cell membrane. In terms of biological role, odorant receptor (Potential). May be involved in taste perception. The polypeptide is Olfactory receptor 5P2 (OR5P2) (Homo sapiens (Human)).